A 527-amino-acid chain; its full sequence is MKIPLLGLLLLISLVGSPTRAEEGPVCPKTETLSRASFPEGFMFGTATAAFQVEGAVNEGCRGPSLWDIYTKKFPHRVKNHNADEAVDFYHRYKEDIQLMKKLNTDGFRLSISWPRIFPHGRMEKGISKEGVQFYHDLIDELLKNDITPLVTVFHWDTPADLEDEYGGFLSERIVPDFVEYANFTFHEYGDKVKNWITFNEPWVFSRSGYDVGKKAPGRCSPYVKEFGKLCQDGRSGFEPYVVSHNLLVGHAEAVDAFRKCEKCKGGKIGIAHSPAWFEPEDVEGGQATVNRVLDFVIGWHLDPTTFGDYPQSMKDAVGSRLPRFTKAQKAKLKDSTDFVGINYYTSFFAKADQKVDSRNPTWATDALVEFEPKTVDGSIKIGSQPNTAKMAVYAKGLRKLMKYIKDRYNSPEIIITENGYGEDLGDKDTDLSVALNDHNRKYYLQRHLLALNEAICEDKVNVTSYFLWSLMDNFEWQDGYTARFGVYYIDFKNNLTRMEKESAKWLSEFLKPGLKPSKSSKLHEEL.

Residues 1-21 form the signal peptide; the sequence is MKIPLLGLLLLISLVGSPTRA. Residues glutamine 52 and histidine 155 each coordinate a beta-D-glucoside. A glycan (N-linked (GlcNAc...) asparagine) is linked at asparagine 183. Residue 200–201 coordinates a beta-D-glucoside; the sequence is NE. Residue glutamate 201 is the Proton donor of the active site. Cysteine 220 and cysteine 231 form a disulfide bridge. Tyrosine 345 and glutamate 418 together coordinate a beta-D-glucoside. Residue glutamate 418 is the Nucleophile of the active site. A glycan (N-linked (GlcNAc...) asparagine) is linked at asparagine 462. A beta-D-glucoside contacts are provided by residues tryptophan 469, 476 to 477, and phenylalanine 485; that span reads EW. N-linked (GlcNAc...) asparagine glycosylation occurs at asparagine 495. The short motif at 524–527 is the Prevents secretion from ER element; it reads HEEL.

It belongs to the glycosyl hydrolase 1 family.

The protein localises to the endoplasmic reticulum lumen. It carries out the reaction Hydrolysis of terminal, non-reducing beta-D-glucosyl residues with release of beta-D-glucose.. The protein is Beta-glucosidase 19 of Arabidopsis thaliana (Mouse-ear cress).